A 586-amino-acid polypeptide reads, in one-letter code: NADH-quinone oxidoreductase subunit C/D 2 (586 aa).

The interval 1 to 173 (MKWVNKGTVE…RTDPPSHDFE (173 aa)) is NADH dehydrogenase I subunit C. An NADH dehydrogenase I subunit D region spans residues 197–586 (AELVLNWGPL…LDPVVGETDR (390 aa)).

In the N-terminal section; belongs to the complex I 30 kDa subunit family. This sequence in the C-terminal section; belongs to the complex I 49 kDa subunit family. As to quaternary structure, NDH-1 is composed of 13 different subunits. Subunits NuoB, CD, E, F, and G constitute the peripheral sector of the complex.

The protein resides in the cell inner membrane. It carries out the reaction a quinone + NADH + 5 H(+)(in) = a quinol + NAD(+) + 4 H(+)(out). NDH-1 shuttles electrons from NADH, via FMN and iron-sulfur (Fe-S) centers, to quinones in the respiratory chain. The immediate electron acceptor for the enzyme in this species is believed to be ubiquinone. Couples the redox reaction to proton translocation (for every two electrons transferred, four hydrogen ions are translocated across the cytoplasmic membrane), and thus conserves the redox energy in a proton gradient. This chain is NADH-quinone oxidoreductase subunit C/D 2 (nuoC2), found in Aquifex aeolicus (strain VF5).